Consider the following 420-residue polypeptide: D-tagatose-1,6-bisphosphate aldolase subunit GatZ (420 aa).

Belongs to the GatZ/KbaZ family. GatZ subfamily. As to quaternary structure, forms a complex with GatY.

Its pathway is carbohydrate metabolism; D-tagatose 6-phosphate degradation; D-glyceraldehyde 3-phosphate and glycerone phosphate from D-tagatose 6-phosphate: step 2/2. Its function is as follows. Component of the tagatose-1,6-bisphosphate aldolase GatYZ that is required for full activity and stability of the Y subunit. Could have a chaperone-like function for the proper and stable folding of GatY. When expressed alone, GatZ does not show any aldolase activity. Is involved in the catabolism of galactitol. This is D-tagatose-1,6-bisphosphate aldolase subunit GatZ from Shigella boydii serotype 18 (strain CDC 3083-94 / BS512).